The primary structure comprises 284 residues: 3-methyl-2-oxobutanoate hydroxymethyltransferase (284 aa).

Residues Asp44 and Asp83 each contribute to the Mg(2+) site. Residues 44 to 45 (DS), Asp83, and Lys112 each bind 3-methyl-2-oxobutanoate. Position 114 (Glu114) interacts with Mg(2+). Glu181 (proton acceptor) is an active-site residue.

This sequence belongs to the PanB family. Homodecamer; pentamer of dimers. Requires Mg(2+) as cofactor.

The protein localises to the cytoplasm. It carries out the reaction 3-methyl-2-oxobutanoate + (6R)-5,10-methylene-5,6,7,8-tetrahydrofolate + H2O = 2-dehydropantoate + (6S)-5,6,7,8-tetrahydrofolate. It participates in cofactor biosynthesis; coenzyme A biosynthesis. Its activity is regulated as follows. Neither activated nor inhibited by coenzyme A. Catalyzes the reversible reaction in which hydroxymethyl group from 5,10-methylenetetrahydrofolate is transferred onto alpha-ketoisovalerate to form ketopantoate. This Thermococcus kodakarensis (strain ATCC BAA-918 / JCM 12380 / KOD1) (Pyrococcus kodakaraensis (strain KOD1)) protein is 3-methyl-2-oxobutanoate hydroxymethyltransferase.